A 183-amino-acid polypeptide reads, in one-letter code: Transposon gamma-delta resolvase (183 aa).

Residues 2–137 (RLFGYARVST…EGRQEAMAKG (136 aa)) form the Resolvase/invertase-type recombinase catalytic domain. Ser-10 serves as the catalytic O-(5'-phospho-DNA)-serine intermediate. Positions 161-180 (ASHISKTMNIARSTVYKVIN) form a DNA-binding region, H-T-H motif.

This sequence belongs to the site-specific recombinase resolvase family.

In terms of biological role, this protein catalyzes the site-specific recombination of the transposon and also regulates its frequency of transposition. This is Transposon gamma-delta resolvase (tnpR) from Escherichia coli (strain K12).